Reading from the N-terminus, the 391-residue chain is Enoyl-CoA delta isomerase 2 (391 aa).

The N-terminal 36 residues, 1–36, are a transit peptide targeting the mitochondrion; it reads MAAVTWSRARCWCPSLLQVLRLPVTKLHLGRPAMRA. Positions 37–122 constitute an ACB domain; the sequence is TQQDFENAMN…VSSLSSSSEA (86 aa). At lysine 49 the chain carries N6-acetyllysine; alternate. Lysine 49 is subject to N6-succinyllysine; alternate. Lysine 53 carries the N6-succinyllysine modification. An N6-acetyllysine; alternate modification is found at lysine 60. Lysine 60 is subject to N6-succinyllysine; alternate. Residue 64–68 coordinates an acyl-CoA; that stretch reads YALYK. Lysine 68, lysine 79, and lysine 88 each carry N6-succinyllysine. Lysine 90 is modified (N6-acetyllysine; alternate). Lysine 90 carries the N6-succinyllysine; alternate modification. Lysine 90 is an an acyl-CoA binding site. Residue serine 99 is modified to Phosphoserine. Residue tyrosine 109 participates in an acyl-CoA binding. A Phosphoserine modification is found at serine 117. N6-succinyllysine occurs at positions 127 and 159. The ECH-like stretch occupies residues 149–319; it reads TKITFNRPSK…AQGLVTEVFP (171 aa). 196–200 is a binding site for substrate; sequence SGNDL. Lysine 286 is subject to N6-succinyllysine. A Microbody targeting signal motif is present at residues 389-391; that stretch reads PKL.

This sequence in the C-terminal section; belongs to the enoyl-CoA hydratase/isomerase family. Liver (at protein level).

It localises to the peroxisome matrix. It is found in the mitochondrion. It catalyses the reaction a (3Z)-enoyl-CoA = a 4-saturated (2E)-enoyl-CoA. It carries out the reaction a (3E)-enoyl-CoA = a 4-saturated (2E)-enoyl-CoA. The catalysed reaction is (2E)-tetradecenoyl-CoA = (3Z)-tetradecenoyl-CoA. The enzyme catalyses (3E)-tetradecenoyl-CoA = (2E)-tetradecenoyl-CoA. It catalyses the reaction (3E)-octenoyl-CoA = (2E)-octenoyl-CoA. It carries out the reaction (3Z)-octenoyl-CoA = (2E)-octenoyl-CoA. The catalysed reaction is (3E)-nonenoyl-CoA = (2E)-nonenoyl-CoA. It functions in the pathway lipid metabolism; fatty acid beta-oxidation. Able to isomerize both 3-cis and 3-trans double bonds into the 2-trans form in a range of enoyl-CoA species. Has a preference for 3-trans substrates. This chain is Enoyl-CoA delta isomerase 2, found in Rattus norvegicus (Rat).